A 93-amino-acid chain; its full sequence is Small ribosomal subunit protein uS19 (93 aa).

Belongs to the universal ribosomal protein uS19 family.

Protein S19 forms a complex with S13 that binds strongly to the 16S ribosomal RNA. This Oenococcus oeni (strain ATCC BAA-331 / PSU-1) protein is Small ribosomal subunit protein uS19.